A 209-amino-acid chain; its full sequence is Orotate phosphoribosyltransferase (209 aa).

5-phospho-alpha-D-ribose 1-diphosphate contacts are provided by residues Arg-96, Lys-100, His-102, and 122 to 130 (EDLISTGGS). An orotate-binding site is contributed by Ser-126.

This sequence belongs to the purine/pyrimidine phosphoribosyltransferase family. PyrE subfamily. In terms of assembly, homodimer. Requires Mg(2+) as cofactor.

The catalysed reaction is orotidine 5'-phosphate + diphosphate = orotate + 5-phospho-alpha-D-ribose 1-diphosphate. It functions in the pathway pyrimidine metabolism; UMP biosynthesis via de novo pathway; UMP from orotate: step 1/2. Catalyzes the transfer of a ribosyl phosphate group from 5-phosphoribose 1-diphosphate to orotate, leading to the formation of orotidine monophosphate (OMP). This chain is Orotate phosphoribosyltransferase, found in Streptococcus gordonii (strain Challis / ATCC 35105 / BCRC 15272 / CH1 / DL1 / V288).